Consider the following 466-residue polypeptide: MTAAPLRLHPDRLFPADPDTRVVARRLYAEVAGLPIVSPHGHTDPRWFAEDAPFGDASSLLLQPDHYVFRMLYSQGVPLEAIGIGAPVDPRAAWRVLADHYHLFRGTPSRLWLDWVFHSVFGLDVRLAPETADLTFDSINEQLARPEFRPRALFDRFNIELLATTESPLDPLDHHAAIRASGWTGRVITAFRPDPVVDPDFEGFAANLDRLGAMTGEDVGSYAGYLAALRARRAAFAAAGATSTDHGHPTAATADLDRGEAERLYAQVRGGGATAEQAELFRAHMLTVMAEMSIDDGLVMQIHPGSFRNHNADLFRRFGRDKGADIPTRTDFVRALRPLLGRFGNDPRLSLILFTLDESAYARELAPLAGHYPALKLGPAWWFHDSPEGMRRFRRQTTETAGFHNLVGFNDDTRAFLSIPARHDVARRIDCGYLAELVVEHQLDEDEAADLAVDLTYRLVKSAYRL.

The protein belongs to the metallo-dependent hydrolases superfamily. Uronate isomerase family.

The catalysed reaction is D-glucuronate = D-fructuronate. The enzyme catalyses aldehydo-D-galacturonate = keto-D-tagaturonate. It participates in carbohydrate metabolism; pentose and glucuronate interconversion. The protein is Uronate isomerase of Rhizorhabdus wittichii (strain DSM 6014 / CCUG 31198 / JCM 15750 / NBRC 105917 / EY 4224 / RW1) (Sphingomonas wittichii).